The following is a 184-amino-acid chain: ATP synthase subunit b, chloroplastic (184 aa).

Residues 27–49 (LATNPINLSVVFGVLIFFGKGVL) traverse the membrane as a helical segment.

Belongs to the ATPase B chain family. In terms of assembly, F-type ATPases have 2 components, F(1) - the catalytic core - and F(0) - the membrane proton channel. F(1) has five subunits: alpha(3), beta(3), gamma(1), delta(1), epsilon(1). F(0) has four main subunits: a(1), b(1), b'(1) and c(10-14). The alpha and beta chains form an alternating ring which encloses part of the gamma chain. F(1) is attached to F(0) by a central stalk formed by the gamma and epsilon chains, while a peripheral stalk is formed by the delta, b and b' chains.

It localises to the plastid. It is found in the chloroplast thylakoid membrane. F(1)F(0) ATP synthase produces ATP from ADP in the presence of a proton or sodium gradient. F-type ATPases consist of two structural domains, F(1) containing the extramembraneous catalytic core and F(0) containing the membrane proton channel, linked together by a central stalk and a peripheral stalk. During catalysis, ATP synthesis in the catalytic domain of F(1) is coupled via a rotary mechanism of the central stalk subunits to proton translocation. In terms of biological role, component of the F(0) channel, it forms part of the peripheral stalk, linking F(1) to F(0). This chain is ATP synthase subunit b, chloroplastic, found in Arabidopsis thaliana (Mouse-ear cress).